The following is a 129-amino-acid chain: UPF0344 protein SAR0931 (129 aa).

The next 4 helical transmembrane spans lie at 1–21, 36–56, 67–87, and 99–119; these read MLHL…ATYL, LHMV…WILI, MLLT…EVSI, and MFWI…ILPL.

This sequence belongs to the UPF0344 family.

It is found in the cell membrane. This is UPF0344 protein SAR0931 from Staphylococcus aureus (strain MRSA252).